A 134-amino-acid chain; its full sequence is Arsenate reductase (134 aa).

Residues C11, C83, and C90 each act as nucleophile in the active site. Disulfide bonds link C11–C83 and C83–C90.

Belongs to the low molecular weight phosphotyrosine protein phosphatase family. Thioredoxin-coupled ArsC subfamily.

Its subcellular location is the cytoplasm. It carries out the reaction arsenate + [thioredoxin]-dithiol + H(+) = arsenite + [thioredoxin]-disulfide + H2O. Functionally, catalyzes the reduction of arsenate [As(V)] to arsenite [As(III)]. The polypeptide is Arsenate reductase (Bacillus cereus (strain ZK / E33L)).